The following is a 181-amino-acid chain: Isopentenyl-diphosphate Delta-isomerase (181 aa).

Mn(2+) is bound by residues His25 and His32. Residues Pro30–Met164 enclose the Nudix hydrolase domain. Cys67 is a catalytic residue. His69 is a binding site for Mn(2+). Glu87 serves as a coordination point for Mg(2+). Residues Glu114 and Glu116 each contribute to the Mn(2+) site. The active site involves Glu116.

The protein belongs to the IPP isomerase type 1 family. As to quaternary structure, homodimer. It depends on Mg(2+) as a cofactor. Mn(2+) serves as cofactor.

It is found in the cytoplasm. It catalyses the reaction isopentenyl diphosphate = dimethylallyl diphosphate. Its pathway is isoprenoid biosynthesis; dimethylallyl diphosphate biosynthesis; dimethylallyl diphosphate from isopentenyl diphosphate: step 1/1. Catalyzes the 1,3-allylic rearrangement of the homoallylic substrate isopentenyl (IPP) to its highly electrophilic allylic isomer, dimethylallyl diphosphate (DMAPP). The sequence is that of Isopentenyl-diphosphate Delta-isomerase from Salmonella agona (strain SL483).